The primary structure comprises 280 residues: Eukaryotic translation initiation factor 3 subunit F-1 (280 aa).

An MPN domain is found at 8–138 (VRVHPVVLFQ…LRSYVCIQLG (131 aa)).

This sequence belongs to the eIF-3 subunit F family. Component of the eukaryotic translation initiation factor 3 (eIF-3) complex. The eIF-3 complex interacts with pix.

The protein localises to the cytoplasm. In terms of biological role, component of the eukaryotic translation initiation factor 3 (eIF-3) complex, which is involved in protein synthesis of a specialized repertoire of mRNAs and, together with other initiation factors, stimulates binding of mRNA and methionyl-tRNAi to the 40S ribosome. The eIF-3 complex specifically targets and initiates translation of a subset of mRNAs involved in cell proliferation. This Drosophila persimilis (Fruit fly) protein is Eukaryotic translation initiation factor 3 subunit F-1.